Consider the following 228-residue polypeptide: 2,3-bisphosphoglycerate-dependent phosphoglycerate mutase (228 aa).

Substrate is bound by residues 8–15, 21–22, R60, 87–90, K98, 114–115, and 180–181; these read RHGQSAWN, TG, ERHY, RR, and GN. The Tele-phosphohistidine intermediate role is filled by H9. Residue E87 is the Proton donor/acceptor of the active site.

The protein belongs to the phosphoglycerate mutase family. BPG-dependent PGAM subfamily. In terms of assembly, homodimer.

The enzyme catalyses (2R)-2-phosphoglycerate = (2R)-3-phosphoglycerate. Its pathway is carbohydrate degradation; glycolysis; pyruvate from D-glyceraldehyde 3-phosphate: step 3/5. Catalyzes the interconversion of 2-phosphoglycerate and 3-phosphoglycerate. The protein is 2,3-bisphosphoglycerate-dependent phosphoglycerate mutase of Rhizorhabdus wittichii (strain DSM 6014 / CCUG 31198 / JCM 15750 / NBRC 105917 / EY 4224 / RW1) (Sphingomonas wittichii).